We begin with the raw amino-acid sequence, 635 residues long: Beta-mannosyltransferase 2 (635 aa).

Over 1 to 6 the chain is Cytoplasmic; that stretch reads MRTRLN. A helical transmembrane segment spans residues 7-27; that stretch reads FLLLCIASVLSVIWIGVLLTW. Residues 28 to 635 lie on the Extracellular side of the membrane; it reads NDNNLGGISL…EKKEAEKKGK (608 aa). Asn-484 is a glycosylation site (N-linked (GlcNAc...) asparagine). The stretch at 512–635 forms a coiled coil; it reads TRGEAERRRR…EKKEAEKKGK (124 aa). The segment at 517–635 is disordered; the sequence is ERRRRVAEER…EKKEAEKKGK (119 aa).

It belongs to the BMT family.

It localises to the membrane. In terms of biological role, beta-mannosyltransferase involved in cell wall biosynthesis. Initiates the beta-mannosylation of core N-linked glycans. This is Beta-mannosyltransferase 2 (BMT2) from Komagataella phaffii (strain ATCC 76273 / CBS 7435 / CECT 11047 / NRRL Y-11430 / Wegner 21-1) (Yeast).